The chain runs to 264 residues: Tryptophan synthase alpha chain (264 aa).

Catalysis depends on proton acceptor residues Glu-49 and Asp-60.

Belongs to the TrpA family. As to quaternary structure, tetramer of two alpha and two beta chains.

It catalyses the reaction (1S,2R)-1-C-(indol-3-yl)glycerol 3-phosphate + L-serine = D-glyceraldehyde 3-phosphate + L-tryptophan + H2O. The protein operates within amino-acid biosynthesis; L-tryptophan biosynthesis; L-tryptophan from chorismate: step 5/5. Its function is as follows. The alpha subunit is responsible for the aldol cleavage of indoleglycerol phosphate to indole and glyceraldehyde 3-phosphate. The sequence is that of Tryptophan synthase alpha chain from Lachnospira eligens (strain ATCC 27750 / DSM 3376 / VPI C15-48 / C15-B4) (Eubacterium eligens).